We begin with the raw amino-acid sequence, 378 residues long: MRASFFWLLPLLLILASVAQGQPTRPKPGIRRKPKPRPTPRFPQAPEPAEPTDLPPPLPPGPPSVFPDCPRECYCPPDFPSALYCDSRNLRRVPVIPPRIHYLYLQNNFITELPLESFQNATGLRWVNLDNNRIRKVDQRVLGKLPSLAFLYMEKNQLEEVPSALPRNLEQLRLSQNLISRIPPGVFSKLENLLLLDLQHNRLSDGVFKADTFQGLKNLMQLNLAHNILRKMPPKVPQAIHQLYLDSNKIETIPNGYFKDFPNLAFIRMNYNKLSDRGLPKNSFNISNLLVLHLSHNKISNVPAISNKLEHLYLNNNSIEKINGTQICPNNLVAFHDFSSDLENVPHLRYLRLDGNFLKPPIPLDLMMCFRLLQSVVI.

An N-terminal signal peptide occupies residues 1–21; that stretch reads MRASFFWLLPLLLILASVAQG. The tract at residues 22–62 is disordered; it reads QPTRPKPGIRRKPKPRPTPRFPQAPEPAEPTDLPPPLPPGP. The segment covering 28-38 has biased composition (basic residues); that stretch reads PGIRRKPKPRP. Pro residues predominate over residues 39 to 62; it reads TPRFPQAPEPAEPTDLPPPLPPGP. LRR repeat units follow at residues 91–110, 111–134, 135–158, 159–179, 180–203, 204–229, 230–250, 251–274, 275–299, 300–319, 320–358, and 359–378; these read RRVPVIPPRIHYLYLQNNFI, TELPLESFQNATGLRWVNLDNNRI, RKVDQRVLGKLPSLAFLYMEKNQL, EEVPSALPRNLEQLRLSQNLI, SRIPPGVFSKLENLLLLDLQHNRL, SDGVFKADTFQGLKNLMQLNLAHNIL, RKMPPKVPQAIHQLYLDSNKI, ETIPNGYFKDFPNLAFIRMNYNKL, SDRGLPKNSFNISNLLVLHLSHNKI, SNVPAISNKLEHLYLNNNSI, EKINGTQICPNNLVAFHDFSSDLENVPHLRYLRLDGNFL, and KPPIPLDLMMCFRLLQSVVI. An N-linked (GlcNAc...) asparagine glycan is attached at N120. N-linked (GlcNAc...) asparagine glycans are attached at residues N285, N316, and N323. A disulfide bond links C328 and C369.

Belongs to the small leucine-rich proteoglycan (SLRP) family. SLRP class II subfamily. As to quaternary structure, binds the basement membrane heparan sulfate proteoglycan perlecan and triple helical collagens type I and type II. Glycosylated; contains heparan sulfate. As to expression, expressed in cartilage throughout both fetal development and postnatal life. It is also expressed in the developing embryo prior to skeletogenesis. In adult, highest expression in lung, lower levels in cardiac and skeletal muscle.

It is found in the secreted. Its subcellular location is the extracellular space. The protein localises to the extracellular matrix. Its function is as follows. May anchor basement membranes to the underlying connective tissue. This chain is Prolargin (Prelp), found in Mus musculus (Mouse).